The sequence spans 606 residues: Transmembrane 9 superfamily member 1 (606 aa).

A signal peptide spans 1 to 27; sequence MTVLGYPRSWSCHCLPVLILLLGIGHG. A glycan (N-linked (GlcNAc...) asparagine) is linked at asparagine 178. The next 4 membrane-spanning stretches (helical) occupy residues 237–257, 310–330, 339–359, and 373–393; these read LSIINSMVLVFLLVGFVAVIL, VLGVGAQFLALGTGIIVMALL, GAINSAAILLYALTCCISGYV, and VWNIILTSSLFSVPFFLTWSV. Asparagine 401 carries N-linked (GlcNAc...) asparagine glycosylation. The next 4 membrane-spanning stretches (helical) occupy residues 412–432, 469–489, 499–519, and 535–555; these read ILLLLTVWLLVGFPLTVIGGI, VGGFLPFSAISVELYYIFATV, GILFFVFAILLSVGACISIAL, and SVLSVGSTGLFIFLYSVFYYA. N-linked (GlcNAc...) asparagine glycosylation occurs at asparagine 559. A helical membrane pass occupies residues 570 to 590; sequence FGYSLLTGYVFFLMLGTISFF.

This sequence belongs to the nonaspanin (TM9SF) (TC 9.A.2) family.

The protein resides in the lysosome membrane. Its subcellular location is the cytoplasmic vesicle. It localises to the autophagosome membrane. In terms of biological role, plays an essential role in autophagy. The protein is Transmembrane 9 superfamily member 1 (Tm9sf1) of Mus musculus (Mouse).